The primary structure comprises 452 residues: Translation initiation factor eIF2B subunit gamma (452 aa).

Position 1 is an N-acetylmethionine (Met1). The residue at position 260 (Ser260) is a Phosphoserine.

Belongs to the eIF-2B gamma/epsilon subunits family. Component of the translation initiation factor 2B (eIF2B) complex which is a heterodecamer of two sets of five different subunits: alpha, beta, gamma, delta and epsilon. Subunits alpha, beta and delta comprise a regulatory subcomplex and subunits epsilon and gamma comprise a catalytic subcomplex. Within the complex, the hexameric regulatory complex resides at the center, with the two heterodimeric catalytic subcomplexes bound on opposite sides.

The protein localises to the cytoplasm. It is found in the cytosol. With respect to regulation, activated by the chemical integrated stress response (ISR) inhibitor ISRIB which stimulates guanine nucleotide exchange factor activity for both phosphorylated and unphosphorylated eIF2. Its function is as follows. Acts as a component of the translation initiation factor 2B (eIF2B) complex, which catalyzes the exchange of GDP for GTP on the eukaryotic initiation factor 2 (eIF2) complex gamma subunit. Its guanine nucleotide exchange factor activity is repressed when bound to eIF2 complex phosphorylated on the alpha subunit, thereby limiting the amount of methionyl-initiator methionine tRNA available to the ribosome and consequently global translation is repressed. This chain is Translation initiation factor eIF2B subunit gamma (EIF2B3), found in Homo sapiens (Human).